The chain runs to 266 residues: Protein SCO2 homolog, mitochondrial (266 aa).

The transit peptide at 1 to 41 (MLLLTRSPTAWHRLSQLKPRVLPGTLGGQALHLRSWLLSRQ) directs the protein to the mitochondrion. Residues 42–60 (GPAETGGQGQPQGPGLRTR) lie on the Mitochondrial matrix side of the membrane. Residues 61 to 78 (LLITGLFGAGLGGAWLAL) form a helical membrane-spanning segment. Residues 79 to 266 (RAEKERLQQQ…HMAAFRSVLS (188 aa)) lie on the Mitochondrial intermembrane side of the membrane. The region spanning 85 to 259 (LQQQKRTEAL…ISDSVRRHMA (175 aa)) is the Thioredoxin domain. Residues cysteine 133, cysteine 137, and histidine 224 each contribute to the Cu cation site. A disulfide bridge connects residues cysteine 133 and cysteine 137.

Belongs to the SCO1/2 family. Homodimer. Interacts with COA6. Found in a complex with TMEM177, COX20, COA6, MT-CO2/COX2, COX18 and SCO1. Interacts with TMEM177 in a COX20-dependent manner. Interacts with COX20 in a MT-CO2/COX2- and COX18-dependent manner. Interacts with COX16. In terms of tissue distribution, ubiquitous.

Its subcellular location is the mitochondrion inner membrane. Copper metallochaperone essential for the synthesis and maturation of cytochrome c oxidase subunit II (MT-CO2/COX2) by facilitating the incorporation of copper into the Cu(A) site of MT-CO2/COX2. Could also act as a thiol-disulfide oxidoreductase to regulate the redox state of the cysteines in SCO1 during maturation of MT-CO2/COX2. In Homo sapiens (Human), this protein is Protein SCO2 homolog, mitochondrial (SCO2).